The primary structure comprises 409 residues: S-adenosylmethionine synthase (409 aa).

Residue H15 participates in ATP binding. A Mg(2+)-binding site is contributed by D17. Residue E43 participates in K(+) binding. Positions 56 and 100 each coordinate L-methionine. Residues 100 to 110 (QSSDIAQGVNE) form a flexible loop region. Residues 171–173 (DGK), 248–249 (KF), D257, 263–264 (RK), A280, and K284 contribute to the ATP site. Residue D257 participates in L-methionine binding. K288 contacts L-methionine.

Belongs to the AdoMet synthase family. As to quaternary structure, homotetramer; dimer of dimers. The cofactor is Mg(2+). K(+) is required as a cofactor.

The protein resides in the cytoplasm. The enzyme catalyses L-methionine + ATP + H2O = S-adenosyl-L-methionine + phosphate + diphosphate. Its pathway is amino-acid biosynthesis; S-adenosyl-L-methionine biosynthesis; S-adenosyl-L-methionine from L-methionine: step 1/1. Its function is as follows. Catalyzes the formation of S-adenosylmethionine (AdoMet) from methionine and ATP. The overall synthetic reaction is composed of two sequential steps, AdoMet formation and the subsequent tripolyphosphate hydrolysis which occurs prior to release of AdoMet from the enzyme. The chain is S-adenosylmethionine synthase from Prochlorococcus marinus (strain NATL1A).